The chain runs to 599 residues: Elongation factor 4 (599 aa).

A tr-type G domain is found at 4-186 (DNIRNFSIIA…EIVNKIPPPR (183 aa)). Residues 16 to 21 (DHGKST) and 133 to 136 (NKID) contribute to the GTP site.

The protein belongs to the TRAFAC class translation factor GTPase superfamily. Classic translation factor GTPase family. LepA subfamily.

Its subcellular location is the cell inner membrane. The catalysed reaction is GTP + H2O = GDP + phosphate + H(+). Required for accurate and efficient protein synthesis under certain stress conditions. May act as a fidelity factor of the translation reaction, by catalyzing a one-codon backward translocation of tRNAs on improperly translocated ribosomes. Back-translocation proceeds from a post-translocation (POST) complex to a pre-translocation (PRE) complex, thus giving elongation factor G a second chance to translocate the tRNAs correctly. Binds to ribosomes in a GTP-dependent manner. The sequence is that of Elongation factor 4 from Geotalea daltonii (strain DSM 22248 / JCM 15807 / FRC-32) (Geobacter daltonii).